Reading from the N-terminus, the 277-residue chain is Zinc transporter ZupT (277 aa).

8 consecutive transmembrane segments (helical) span residues 7–27, 38–58, 73–93, 133–155, 165–187, 196–216, 220–240, and 257–277; these read VLLA…GSAI, FLAV…FVEI, VLAS…IAVI, AGVL…AFSA, AIAV…PIYY, FLYS…GYVV, FFTP…MVYI, and LCIL…LLFL. 2 residues coordinate Fe(2+): N145 and E148. Zn(2+) contacts are provided by E148 and H173. Fe(2+) is bound by residues N174, E177, and E206. A Zn(2+)-binding site is contributed by E177.

The protein belongs to the ZIP transporter (TC 2.A.5) family. ZupT subfamily.

Its subcellular location is the cell inner membrane. It carries out the reaction Zn(2+)(in) = Zn(2+)(out). In terms of biological role, mediates zinc uptake. May also transport other divalent cations. In Nitratidesulfovibrio vulgaris (strain ATCC 29579 / DSM 644 / CCUG 34227 / NCIMB 8303 / VKM B-1760 / Hildenborough) (Desulfovibrio vulgaris), this protein is Zinc transporter ZupT.